Here is a 100-residue protein sequence, read N- to C-terminus: RxLR effector protein SFI8 (100 aa).

The first 22 residues, 1–22 (MRSILYAVLAFAVLARSSAVAA), serve as a signal peptide directing secretion. The RxLR-dEER motif lies at 43 to 57 (RSLRVEAQEVIQSGR). The Calmodulin-binding motif motif lies at 78–82 (KPDIK).

The protein belongs to the RxLR effector family. In terms of assembly, interacts with the host calmodulin.

The protein resides in the secreted. It localises to the host nucleus. Its subcellular location is the host cytoplasm. Functionally, effector that suppresses flg22-induced post-translational MAP kinase activation both tomato and Arabidopsis. The perception of highly conserved pathogen- or microbe-associated molecular patterns (PAMPs/MAMPs), such as flg22, triggers converging signaling pathways recruiting MAP kinase cascades and inducing transcriptional re-programming, yielding a generic antimicrobial response. Associates with calmodulin to interfere with plant defense-associated calcium signaling in hosts. The chain is RxLR effector protein SFI8 from Phytophthora infestans (strain T30-4) (Potato late blight agent).